The primary structure comprises 104 residues: Colipase-like protein 2 (104 aa).

A signal peptide spans M1–P19. 5 disulfides stabilise this stretch: C38–C49, C44–C60, C48–C82, C70–C90, and C84–C101.

This sequence belongs to the colipase family.

The protein resides in the secreted. The sequence is that of Colipase-like protein 2 (Clpsl2) from Rattus norvegicus (Rat).